We begin with the raw amino-acid sequence, 352 residues long: Heat-inducible transcription repressor HrcA (352 aa).

This sequence belongs to the HrcA family.

Negative regulator of class I heat shock genes (grpE-dnaK-dnaJ and groELS operons). Prevents heat-shock induction of these operons. The chain is Heat-inducible transcription repressor HrcA from Thermosynechococcus vestitus (strain NIES-2133 / IAM M-273 / BP-1).